Here is a 355-residue protein sequence, read N- to C-terminus: Chemerin-like receptor 2 (355 aa).

Over Met1–Ser41 the chain is Extracellular. Asn14 is a glycosylation site (N-linked (GlcNAc...) asparagine). The chain crosses the membrane as a helical span at residues Leu42–Phe62. The Cytoplasmic segment spans residues Thr63–Thr73. A helical membrane pass occupies residues Leu74–Ile94. Topologically, residues Ser95 to Ala112 are extracellular. Cysteines 110 and 187 form a disulfide. Residues Asn113–Leu133 form a helical membrane-spanning segment. At Asp134–Ser154 the chain is on the cytoplasmic side. A helical membrane pass occupies residues Leu155–Phe175. Residues Arg176–Lys210 lie on the Extracellular side of the membrane. Residues Tyr211 to Leu231 traverse the membrane as a helical segment. At Lys232–Thr247 the chain is on the cytoplasmic side. A helical membrane pass occupies residues Ile248–Trp268. Residues Glu269–Ile286 lie on the Extracellular side of the membrane. A helical membrane pass occupies residues Pro287–Ile307. Residues Ser308–Gln355 are Cytoplasmic-facing.

This sequence belongs to the chemokine-like receptor (CMKLR) family.

It is found in the cell membrane. Its function is as follows. Receptor for chemoattractant adipokine chemerin/RARRES2 suggesting a role for this receptor in the regulation of inflammation and energy homesotasis. Signals mainly via beta-arrestin pathway. Binding of RARRES2 activates weakly G proteins, calcium mobilization and MAPK1/MAPK3 (ERK1/2) phosphorylation too. Acts also as a receptor for TAFA1, mediates its effects on neuronal stem-cell proliferation and differentiation via the activation of ROCK/ERK and ROCK/STAT3 signaling pathway. The chain is Chemerin-like receptor 2 (CMKLR2) from Macaca fascicularis (Crab-eating macaque).